Consider the following 254-residue polypeptide: UDP-2,3-diacylglucosamine hydrolase (254 aa).

Asp8, His10, Asp41, Asn79, and His114 together coordinate Mn(2+). 79–80 (NR) serves as a coordination point for substrate. 5 residues coordinate substrate: Asp122, Ser160, Asn164, Lys167, and His195. Residues His195 and His197 each contribute to the Mn(2+) site.

This sequence belongs to the LpxH family. The cofactor is Mn(2+).

It is found in the cell inner membrane. The enzyme catalyses UDP-2-N,3-O-bis[(3R)-3-hydroxytetradecanoyl]-alpha-D-glucosamine + H2O = 2-N,3-O-bis[(3R)-3-hydroxytetradecanoyl]-alpha-D-glucosaminyl 1-phosphate + UMP + 2 H(+). Its pathway is glycolipid biosynthesis; lipid IV(A) biosynthesis; lipid IV(A) from (3R)-3-hydroxytetradecanoyl-[acyl-carrier-protein] and UDP-N-acetyl-alpha-D-glucosamine: step 4/6. In terms of biological role, hydrolyzes the pyrophosphate bond of UDP-2,3-diacylglucosamine to yield 2,3-diacylglucosamine 1-phosphate (lipid X) and UMP by catalyzing the attack of water at the alpha-P atom. Involved in the biosynthesis of lipid A, a phosphorylated glycolipid that anchors the lipopolysaccharide to the outer membrane of the cell. The polypeptide is UDP-2,3-diacylglucosamine hydrolase (Aeromonas salmonicida (strain A449)).